The primary structure comprises 721 residues: Protein quick-to-court (721 aa).

Disordered stretches follow at residues 1–42, 143–210, 360–379, 393–428, and 441–471; these read MMTS…RIPH, VGNS…ASVA, SSPE…EAEL, DEGN…MQSS, and SSVH…CGAG. Over residues 17–31 the composition is skewed to basic and acidic residues; that stretch reads QVQREKDNDSAEDSH. Positions 161–201 are enriched in low complexity; it reads NGGSDISSSGTSSSSSNNKESSPRTTRTPRTPQTPQTPQTP. Over residues 362-379 the composition is skewed to basic and acidic residues; the sequence is PEERSASSDAVTVREAEL. A compositionally biased stretch (low complexity) spans 406 to 420; sequence RQQQQQANHSLQAMQ. A compositionally biased stretch (polar residues) spans 441–454; that stretch reads SSVHSKDSQTQSEA. A coiled-coil region spans residues 511-569; sequence KRSHNDKVEALLQKLAECNTRYSDMVPDYEQAKQRIRELEKQLEDLQRKLIEHEEKQNK. The GRIP domain maps to 668–716; sequence HVDPEVTLQFLKSAIFYFLTDKENSQGHLQAIESILEFTDAEKQKISAA.

In terms of tissue distribution, expressed in the third antennal segment and the maxillary palp, with increased expression near the cuticle of both olfactory organs. Also detected in the second antenna segment. In the brain, expressed in the central nervous system, with high levels of expression in the visual system including the retina and optic lobe, and uniform expression in the cortex. Detected in the thorax and abdomen, with increased expression in the ventral ganglion. In males, detected in the reproductive tract including the ejaculatory bulb and testis.

In adult males, modulates sexual behavior by playing a role in sex discrimination and maintaining normal levels of sexual activity towards both males and females. This is Protein quick-to-court from Drosophila melanogaster (Fruit fly).